Reading from the N-terminus, the 157-residue chain is Protein MG115 homolog (157 aa).

It belongs to the CinA family.

In Mycoplasma pneumoniae (strain ATCC 29342 / M129 / Subtype 1) (Mycoplasmoides pneumoniae), this protein is Protein MG115 homolog.